A 635-amino-acid chain; its full sequence is Biosynthetic arginine decarboxylase (635 aa).

An N6-(pyridoxal phosphate)lysine modification is found at K101. 284 to 294 is a binding site for substrate; sequence VDVGGGLGVDY.

This sequence belongs to the Orn/Lys/Arg decarboxylase class-II family. SpeA subfamily. It depends on Mg(2+) as a cofactor. Requires pyridoxal 5'-phosphate as cofactor.

It carries out the reaction L-arginine + H(+) = agmatine + CO2. It functions in the pathway amine and polyamine biosynthesis; agmatine biosynthesis; agmatine from L-arginine: step 1/1. Functionally, catalyzes the biosynthesis of agmatine from arginine. The chain is Biosynthetic arginine decarboxylase from Tolumonas auensis (strain DSM 9187 / NBRC 110442 / TA 4).